We begin with the raw amino-acid sequence, 533 residues long: Capsid protein VP1 (533 aa).

Residues 333–353 (TIDLQQNPVPQTSSSTTDSPQ) are disordered.

This sequence belongs to the microviridae F protein family.

Its subcellular location is the virion. It is found in the host cytoplasm. Functionally, assembles to form an icosahedral capsid with a T=1 symmetry. This is Capsid protein VP1 from Bdellovibrio bacteriovorus (Bacteriophage phiMH2K).